A 468-amino-acid polypeptide reads, in one-letter code: MFAKLQRIHFVGIGGIGMSGIAEVLLNLGYKVSGSDLKPSAVTERLESLGAKVFEGHRASNVEGAEVVVTSSAIDSRNPEVAEAHANHIPVIQRAEMLAELMRLKYGIAIAGMHGKTTTTSMVAAVLAGGELDPTVIVGGRVDAMGSNARLGKSHYLVAEADESDRSFLKLWFIHAVVTNIDREHMDTYHDMEDVERTFVEFMDRVPFYGMVVACNDNEPLRAILPRVRRRIVTYGTTEGSDFLIRCVPCDSEQLLLGFLNRFSVEYRGKSLGEFLLRVPGLHNVRNATAAIAIGVGLDIPADKIRAALAEFRGVDRRFQLKGKANDISVIDDYGHHPTEIRATLAAAKQCGFRHIHVVFQPHRYTRTRDLMDEFASSFGDADSLYLLDIYPASEQPIEGVNTEALARRITEVSGRATFYAKSFQVAAIMAATAAEPGDMILTLGAGNVSQLGPQILERLSAKKVAAE.

112–118 (GMHGKTT) is a binding site for ATP.

This sequence belongs to the MurCDEF family.

Its subcellular location is the cytoplasm. The enzyme catalyses UDP-N-acetyl-alpha-D-muramate + L-alanine + ATP = UDP-N-acetyl-alpha-D-muramoyl-L-alanine + ADP + phosphate + H(+). Its pathway is cell wall biogenesis; peptidoglycan biosynthesis. Its function is as follows. Cell wall formation. The chain is UDP-N-acetylmuramate--L-alanine ligase from Koribacter versatilis (strain Ellin345).